The chain runs to 59 residues: Conorfamide-Vc1 (59 aa).

Residues 1–19 (MSGRGFLLLALLLLVTVEA) form the signal peptide. A propeptide spanning residues 20–25 (TKVEKK) is cleaved from the precursor. Positions 32–39 (AWSGPRNR) are positively charged region crucial for activity against MRGPRX1 receptors. Phe-43 is subject to Phenylalanine amide. The propeptide occupies 45-59 (RRDMQSPLLSERLRL).

It belongs to the FARP (FMRFamide related peptide) family. In terms of tissue distribution, expressed by the venom duct.

It is found in the secreted. In terms of biological role, this peptide activates human and mouse sensory neuron-specific G-protein coupled receptors MRGPRX1. The activity on human receptors has been measured (EC(50)=1.8 uM). Compared with the agonist chloroquine (anti-malaria drug), it is 200-fold more potent. The peptide also causes an increase in cytosolic calcium in a specific subset of DRG neurons, and, in contrast to other Conus venom peptides, the peptide also affects a large fraction of the non-neuronal cells. In vivo, when intracranially injected into mice, it principally renders mice unable to move, and at very low doses, it causes hyperactivity. It also induces itch sensation, since intradermal cheek injection into humanized transgenic mouse (mouse MRGPRX1 replaced by human MRGPRX1) induces scratching. In vivo, when tested at high doses (10 uM) on zebrafish larvae, it induces a range of behavioral effects ranging from an early hypoactivity during the first hour of treatment to an increase in movement during the following hours when the larvae are submitted to strobe light phases. This is Conorfamide-Vc1 from Conus victoriae (Queen Victoria cone).